Reading from the N-terminus, the 911-residue chain is General transcription factor 3C polypeptide 2 (911 aa).

2 disordered regions span residues 34–187 (LDVK…RRRA) and 205–297 (ALPA…MAPN). Polar residues predominate over residues 35–46 (DVKTSSEMTSAE). Ser-63 is subject to Phosphoserine. Over residues 64–81 (PDQRRLPPEQESLSRLEQ) the composition is skewed to basic and acidic residues. The segment covering 92 to 112 (SKPRASKPGRKRGGRTRKGPK) has biased composition (basic residues). Over residues 114-123 (PQQPNPPSAP) the composition is skewed to pro residues. Residues Ser-132, Ser-165, Ser-167, Ser-220, and Ser-260 each carry the phosphoserine modification. Over residues 253–262 (EAEDVEESEG) the composition is skewed to acidic residues. Positions 263-275 (PSESSSEPEPAVP) are enriched in low complexity. WD repeat units lie at residues 465-521 (CDNG…ALLA) and 552-593 (SECG…PLQR). Ser-597 carries the post-translational modification Phosphoserine. The stretch at 611-651 (AHDQAVRTLQWCKANSHFLASAGSDRKIKFWDLRRPYEPIN) is one WD 3 repeat. The interval 765-785 (SPEGPDHSSASSGVPNPPKAR) is disordered. One copy of the WD 4 repeat lies at 832–874 (LQLEAIHKVRFSPNLDSYGWLVSGGQSGLVRIHFVRGLASPLG). A phosphoserine mark is found at Ser-871, Ser-892, and Ser-893. Residues 889 to 911 (FQPSSPTRRPGFSPTSHRLLPTP) form a disordered region. Position 895 is a phosphothreonine (Thr-895). Ser-901 carries the post-translational modification Phosphoserine.

As to quaternary structure, part of the TFIIIC subcomplex TFIIIC2, consisting of six subunits, GTF3C1, GTF3C2, GTF3C3, GTF3C4, GTF3C5 and GTF3C6.

The protein resides in the nucleus. Required for RNA polymerase III-mediated transcription. Component of TFIIIC that initiates transcription complex assembly on tRNA and is required for transcription of 5S rRNA and other stable nuclear and cytoplasmic RNAs. May play a direct role in stabilizing interactions of TFIIIC2 with TFIIIC1. The protein is General transcription factor 3C polypeptide 2 (GTF3C2) of Pongo abelii (Sumatran orangutan).